A 379-amino-acid polypeptide reads, in one-letter code: Alkanesulfonate monooxygenase (379 aa).

Belongs to the SsuD family.

It carries out the reaction an alkanesulfonate + FMNH2 + O2 = an aldehyde + FMN + sulfite + H2O + 2 H(+). Functionally, catalyzes the desulfonation of aliphatic sulfonates. This Sorangium cellulosum (strain So ce56) (Polyangium cellulosum (strain So ce56)) protein is Alkanesulfonate monooxygenase.